Here is a 295-residue protein sequence, read N- to C-terminus: 4-hydroxy-tetrahydrodipicolinate synthase (295 aa).

Pyruvate is bound at residue T48. The active-site Proton donor/acceptor is the Y135. Catalysis depends on K163, which acts as the Schiff-base intermediate with substrate. V204 lines the pyruvate pocket.

Belongs to the DapA family. Homotetramer; dimer of dimers.

It localises to the cytoplasm. It catalyses the reaction L-aspartate 4-semialdehyde + pyruvate = (2S,4S)-4-hydroxy-2,3,4,5-tetrahydrodipicolinate + H2O + H(+). Its pathway is amino-acid biosynthesis; L-lysine biosynthesis via DAP pathway; (S)-tetrahydrodipicolinate from L-aspartate: step 3/4. Catalyzes the condensation of (S)-aspartate-beta-semialdehyde [(S)-ASA] and pyruvate to 4-hydroxy-tetrahydrodipicolinate (HTPA). This is 4-hydroxy-tetrahydrodipicolinate synthase from Francisella philomiragia subsp. philomiragia (strain ATCC 25017 / CCUG 19701 / FSC 153 / O#319-036).